We begin with the raw amino-acid sequence, 1042 residues long: Ubiquitin carboxyl-terminal hydrolase 38 (1042 aa).

The USP domain maps to 445-949; that stretch reads TGLINLGNTC…TAYVLLYKKQ (505 aa). The active-site Nucleophile is the Cys454. Residue His857 is the Proton acceptor of the active site.

This sequence belongs to the peptidase C19 family. As to quaternary structure, interacts with isoform 1 of FBXW7; this interaction prevents FBXW7-mediated degradation of MYC.

It localises to the cytoplasm. The protein localises to the nucleus. It catalyses the reaction Thiol-dependent hydrolysis of ester, thioester, amide, peptide and isopeptide bonds formed by the C-terminal Gly of ubiquitin (a 76-residue protein attached to proteins as an intracellular targeting signal).. In terms of biological role, deubiquitinating enzyme that plays a role in various cellular processes, including DNA repair, cell cycle regulation, and immune response. Plays a role in the inhibition of type I interferon signaling by mediating the 'Lys-33' to 'Lys-48' ubiquitination transition of TBK1 leading to its degradation. Cleaves the ubiquitin chain from the histone demethylase LSD1/KDM1A and prevents it from degradation by the 26S proteasome, thus maintaining LSD1 protein level in cells. Plays a role in the DNA damage response by regulating the deacetylase activity of HDAC1. Mechanistically, removes the 'Lys-63'-linked ubiquitin chain promoting the deacetylase activity of HDAC1 in response to DNA damage. Also acts as a specific deubiquitinase of histone deacetylase 3/HDAC3 and cleaves its 'Lys-63'-linked ubiquitin chains to lower its histone deacetylase activity. Regulates MYC levels and cell proliferation via antagonizing ubiquitin E3 ligase FBXW7 thereby preventing MYC 'Lys-48'-linked ubiquitination and degradation. Participates in antiviral response by removing both 'Lys-48'-linked and 'Lys-63'-linked polyubiquitination of Zika virus envelope protein E. Constitutively associated with IL-33R/IL1RL1, deconjugates its 'Lys-27'-linked polyubiquitination resulting in its autophagic degradation. This Mus musculus (Mouse) protein is Ubiquitin carboxyl-terminal hydrolase 38 (Usp38).